Here is a 271-residue protein sequence, read N- to C-terminus: Inactive phospholipid phosphatase 7 (271 aa).

Residues 1-66 (MPASQSRARA…RERRQSQQLP (66 aa)) are disordered. Over 1–112 (MPASQSRARA…AASWASARSM (112 aa)) the chain is Cytoplasmic. Phosphoserine is present on residues Ser-43 and Ser-62. Residues 70-91 (CMQLNPSFKGIAFNSLLAIDIC) are interaction with MTOR. The chain crosses the membrane as a helical span at residues 113–133 (VKLIGITGHGIPWIGGTILCL). The Extracellular portion of the chain corresponds to 134-141 (VKSSTLAG). The chain crosses the membrane as a helical span at residues 142-162 (QEVLMNLLLALLLDIMTVAGV). Over 163–202 (QKLIKRRGPYETSPSLLDYLTMDIYAFPAGHASRAAMVSK) the chain is Cytoplasmic. Residues 203–223 (FFLSHLVLAVPLRVLLVLWAL) form a helical membrane-spanning segment. At 224-239 (CVGLSRVMIGRHHVTD) the chain is on the extracellular side. Residues 240-260 (VLSGFVIGYLQFRLVELVWMP) form a helical membrane-spanning segment. Residues 261 to 271 (SSTCQMLISAW) are Cytoplasmic-facing.

This sequence belongs to the PA-phosphatase related phosphoesterase family. In terms of assembly, homo and heterooligomer. Interacts with MTOR; controls MTOR-dependent IGF2 expression during myoblast differentiation.

Its subcellular location is the nucleus envelope. It localises to the endoplasmic reticulum membrane. The protein localises to the membrane. In terms of biological role, plays a role as negative regulator of myoblast differentiation, in part through effects on MTOR signaling. Has no detectable enzymatic activity. The polypeptide is Inactive phospholipid phosphatase 7 (Homo sapiens (Human)).